The following is a 371-amino-acid chain: Dual-specificity RNA methyltransferase RlmN (371 aa).

Glu-92 serves as the catalytic Proton acceptor. One can recognise a Radical SAM core domain in the interval 98–337; it reads EADRATLCVS…VTVRKTRGDD (240 aa). Cys-105 and Cys-342 are disulfide-bonded. Residues Cys-112, Cys-116, and Cys-119 each contribute to the [4Fe-4S] cluster site. Residues 166 to 167, Ser-198, 220 to 222, and Asn-299 contribute to the S-adenosyl-L-methionine site; these read GE and SLH. Residue Cys-342 is the S-methylcysteine intermediate of the active site.

It belongs to the radical SAM superfamily. RlmN family. Requires [4Fe-4S] cluster as cofactor.

The protein resides in the cytoplasm. It catalyses the reaction adenosine(2503) in 23S rRNA + 2 reduced [2Fe-2S]-[ferredoxin] + 2 S-adenosyl-L-methionine = 2-methyladenosine(2503) in 23S rRNA + 5'-deoxyadenosine + L-methionine + 2 oxidized [2Fe-2S]-[ferredoxin] + S-adenosyl-L-homocysteine. The enzyme catalyses adenosine(37) in tRNA + 2 reduced [2Fe-2S]-[ferredoxin] + 2 S-adenosyl-L-methionine = 2-methyladenosine(37) in tRNA + 5'-deoxyadenosine + L-methionine + 2 oxidized [2Fe-2S]-[ferredoxin] + S-adenosyl-L-homocysteine. Specifically methylates position 2 of adenine 2503 in 23S rRNA and position 2 of adenine 37 in tRNAs. m2A2503 modification seems to play a crucial role in the proofreading step occurring at the peptidyl transferase center and thus would serve to optimize ribosomal fidelity. The polypeptide is Dual-specificity RNA methyltransferase RlmN (Actinobacillus succinogenes (strain ATCC 55618 / DSM 22257 / CCUG 43843 / 130Z)).